The sequence spans 72 residues: General transcription factor IIH subunit 5 (72 aa).

Belongs to the TFB5 family. Component of the 7-subunit TFIIH core complex composed of XPB/repB, XPD/repD, gtf2h1, gtf2h2, gtf2h3, gtf2h4 and gtf2h5, which is active in NER. The core complex associates with the 3-subunit CDK-activating kinase (CAK) module composed of cycH/cyclin H, cdk7 and mnat1 to form the 10-subunit holoenzyme (holo-TFIIH) active in transcription.

It is found in the nucleus. In terms of biological role, component of the general transcription and DNA repair factor IIH (TFIIH) core complex, which is involved in general and transcription-coupled nucleotide excision repair (NER) of damaged DNA and, when complexed to CAK, in RNA transcription by RNA polymerase II. In NER, TFIIH acts by opening DNA around the lesion to allow the excision of the damaged oligonucleotide and its replacement by a new DNA fragment. In transcription, TFIIH has an essential role in transcription initiation. When the pre-initiation complex (PIC) has been established, TFIIH is required for promoter opening and promoter escape. Phosphorylation of the C-terminal tail (CTD) of the largest subunit of RNA polymerase II by the kinase module CAK controls the initiation of transcription. This Dictyostelium discoideum (Social amoeba) protein is General transcription factor IIH subunit 5 (gtf2h5).